A 129-amino-acid chain; its full sequence is L-ectoine synthase (129 aa).

The protein belongs to the ectoine synthase family.

The enzyme catalyses (2S)-4-acetamido-2-aminobutanoate = L-ectoine + H2O. It functions in the pathway amine and polyamine biosynthesis; ectoine biosynthesis; L-ectoine from L-aspartate 4-semialdehyde: step 3/3. Functionally, catalyzes the circularization of gamma-N-acetyl-alpha,gamma-diaminobutyric acid (ADABA) to ectoine (1,4,5,6-tetrahydro-2-methyl-4-pyrimidine carboxylic acid), which is an excellent osmoprotectant. This Mycobacterium sp. (strain KMS) protein is L-ectoine synthase.